A 417-amino-acid polypeptide reads, in one-letter code: Serine hydroxymethyltransferase (417 aa).

(6S)-5,6,7,8-tetrahydrofolate contacts are provided by residues L121 and 125–127 (GHL). Residue K229 is modified to N6-(pyridoxal phosphate)lysine. 355 to 357 (SPF) is a (6S)-5,6,7,8-tetrahydrofolate binding site.

Belongs to the SHMT family. Homodimer. Pyridoxal 5'-phosphate is required as a cofactor.

The protein localises to the cytoplasm. It carries out the reaction (6R)-5,10-methylene-5,6,7,8-tetrahydrofolate + glycine + H2O = (6S)-5,6,7,8-tetrahydrofolate + L-serine. Its pathway is one-carbon metabolism; tetrahydrofolate interconversion. The protein operates within amino-acid biosynthesis; glycine biosynthesis; glycine from L-serine: step 1/1. Its function is as follows. Catalyzes the reversible interconversion of serine and glycine with tetrahydrofolate (THF) serving as the one-carbon carrier. This reaction serves as the major source of one-carbon groups required for the biosynthesis of purines, thymidylate, methionine, and other important biomolecules. Also exhibits THF-independent aldolase activity toward beta-hydroxyamino acids, producing glycine and aldehydes, via a retro-aldol mechanism. The sequence is that of Serine hydroxymethyltransferase from Salmonella schwarzengrund (strain CVM19633).